A 692-amino-acid chain; its full sequence is Elongation factor G (692 aa).

One can recognise a tr-type G domain in the interval E8 to L283. Residues A17 to T24, D81 to H85, and N135 to D138 each bind GTP.

The protein belongs to the TRAFAC class translation factor GTPase superfamily. Classic translation factor GTPase family. EF-G/EF-2 subfamily.

It is found in the cytoplasm. In terms of biological role, catalyzes the GTP-dependent ribosomal translocation step during translation elongation. During this step, the ribosome changes from the pre-translocational (PRE) to the post-translocational (POST) state as the newly formed A-site-bound peptidyl-tRNA and P-site-bound deacylated tRNA move to the P and E sites, respectively. Catalyzes the coordinated movement of the two tRNA molecules, the mRNA and conformational changes in the ribosome. The sequence is that of Elongation factor G from Caulobacter sp. (strain K31).